Consider the following 252-residue polypeptide: tRNA-cytidine(32) 2-sulfurtransferase (252 aa).

A PP-loop motif motif is present at residues 37–42 (SGGKDS). [4Fe-4S] cluster contacts are provided by C112, C115, and C202.

It belongs to the TtcA family. As to quaternary structure, homodimer. The cofactor is Mg(2+). Requires [4Fe-4S] cluster as cofactor.

The protein localises to the cytoplasm. It carries out the reaction cytidine(32) in tRNA + S-sulfanyl-L-cysteinyl-[cysteine desulfurase] + AH2 + ATP = 2-thiocytidine(32) in tRNA + L-cysteinyl-[cysteine desulfurase] + A + AMP + diphosphate + H(+). It participates in tRNA modification. Functionally, catalyzes the ATP-dependent 2-thiolation of cytidine in position 32 of tRNA, to form 2-thiocytidine (s(2)C32). The sulfur atoms are provided by the cysteine/cysteine desulfurase (IscS) system. This chain is tRNA-cytidine(32) 2-sulfurtransferase, found in Geotalea daltonii (strain DSM 22248 / JCM 15807 / FRC-32) (Geobacter daltonii).